A 102-amino-acid chain; its full sequence is Spexin prohormone 1 (102 aa).

Residues 1-26 (MKDLRTLAAYALALLLLATFVSHSWS) form the signal peptide. Positions 27–35 (APKGSFQRR) are excised as a propeptide. Glutamine 49 is subject to Glutamine amide. A propeptide spanning residues 50-102 (GRRFVSEDRNEGDLYDTIRLESRSQNTENLSISKAAAFLLNILQQARDEDEPY) is cleaved from the precursor.

It belongs to the spexin family. As to expression, mainly expressed in the brain and ovary. Detected bilaterally in the adult brainstem. Expressed in neurons in the dorsal habenula (dHb). In the dHb some neurons project into the interpeduncular nucleus (IPN) where expression often overlaps with galr2a and galr2b. Weakly expressed in the liver, intestine, kidney, heart and gill.

The protein localises to the secreted. Its subcellular location is the extracellular space. The protein resides in the cytoplasmic vesicle. It localises to the secretory vesicle. Functionally, plays a role in the regulation of food intake and energy metabolism. May also be involved in suppressing the anxiety response by promoting the expression of serotonin-related genes such as fev, tph2 and slc6a4a. Its function is as follows. Acts as a ligand for galanin receptors galr2a and galr2b. Brain administration of the peptide inhibits food consumption and elevates levels of glucose, triacylglycerol and cholesterol in the serum. Likely to control food intake by regulating appetite related genes which includes the negative regulation of the orexigenic factor agrp. By controlling food intake it may act as a satiety factor in energy metabolism. This chain is Spexin prohormone 1 (spx), found in Danio rerio (Zebrafish).